Here is a 277-residue protein sequence, read N- to C-terminus: Glucose-6-phosphatase catalytic subunit 1 (277 aa).

Arginine 4 contacts substrate. A run of 2 helical transmembrane segments spans residues 39–59 and 67–87; these read GHAM…LSIA and LLYR…ELVV. Histidine 40 acts as the Proton donor in catalysis. Arginine 91 contacts substrate. Histidine 97 serves as the catalytic Nucleophile. The next 3 helical transmembrane spans lie at 131–151, 215–235, and 250–270; these read FLIT…LKAL, IGCI…TFSP, and AVAL…IYPV. Residues 274–277 carry the Prevents secretion from ER motif; sequence GKNL.

The protein belongs to the glucose-6-phosphatase family.

Its subcellular location is the endoplasmic reticulum membrane. It carries out the reaction D-glucose 6-phosphate + H2O = D-glucose + phosphate. It functions in the pathway carbohydrate biosynthesis; gluconeogenesis. Functionally, hydrolyzes glucose-6-phosphate to glucose in the endoplasmic reticulum. Forms with the glucose-6-phosphate transporter (SLC37A4/G6PT) the complex responsible for glucose production in the terminal step of glycogenolysis and gluconeogenesis. Hence, it is the key enzyme in homeostatic regulation of blood glucose levels. This chain is Glucose-6-phosphatase catalytic subunit 1 (g6pc1), found in Haplochromis xenognathus (Lake Victoria cichlid).